The chain runs to 211 residues: Spore protein YabQ (211 aa).

A run of 6 helical transmembrane segments spans residues 7 to 27, 40 to 60, 66 to 86, 90 to 110, 116 to 136, and 141 to 161; these read FYTM…LDTY, LLFI…FYVL, GEFR…YQSL, IYIK…QFFK, VLFR…AFLF, and SLIG…CFPI.

It is found in the forespore outer membrane. Its function is as follows. Required for sporulation. Plays an important role in cortex and coat formation. The sequence is that of Spore protein YabQ (yabQ) from Bacillus subtilis (strain 168).